We begin with the raw amino-acid sequence, 51 residues long: Ovomucoid (51 aa).

Residues 3 to 51 enclose the Kazal-like domain; it reads VDCSGYPKPACTLEYFPLCGSDNQTYANKCTFCNAVVEKNVTLNHLGEC. 3 disulfide bridges follow: cysteine 5–cysteine 35, cysteine 13–cysteine 32, and cysteine 21–cysteine 51. The N-linked (GlcNAc...) asparagine glycan is linked to asparagine 42.

It is found in the secreted. This is Ovomucoid from Nothoprocta perdicaria (Chilean tinamou).